Reading from the N-terminus, the 509-residue chain is UDP-N-acetylmuramoyl-L-alanyl-D-glutamate--2,6-diaminopimelate ligase (509 aa).

S30 provides a ligand contact to UDP-N-acetyl-alpha-D-muramoyl-L-alanyl-D-glutamate. Residue 110-116 participates in ATP binding; that stretch reads GTNGKTT. Residues 152 to 153, S179, Q185, and R187 contribute to the UDP-N-acetyl-alpha-D-muramoyl-L-alanyl-D-glutamate site; that span reads TT. Residue K219 is modified to N6-carboxylysine. Meso-2,6-diaminopimelate is bound by residues R385, 409 to 412, G476, and E480; that span reads DNPR. The Meso-diaminopimelate recognition motif motif lies at 409 to 412; sequence DNPR.

It belongs to the MurCDEF family. MurE subfamily. It depends on Mg(2+) as a cofactor. Carboxylation is probably crucial for Mg(2+) binding and, consequently, for the gamma-phosphate positioning of ATP.

It localises to the cytoplasm. It catalyses the reaction UDP-N-acetyl-alpha-D-muramoyl-L-alanyl-D-glutamate + meso-2,6-diaminopimelate + ATP = UDP-N-acetyl-alpha-D-muramoyl-L-alanyl-gamma-D-glutamyl-meso-2,6-diaminopimelate + ADP + phosphate + H(+). Its pathway is cell wall biogenesis; peptidoglycan biosynthesis. Functionally, catalyzes the addition of meso-diaminopimelic acid to the nucleotide precursor UDP-N-acetylmuramoyl-L-alanyl-D-glutamate (UMAG) in the biosynthesis of bacterial cell-wall peptidoglycan. This chain is UDP-N-acetylmuramoyl-L-alanyl-D-glutamate--2,6-diaminopimelate ligase, found in Geobacter sulfurreducens (strain ATCC 51573 / DSM 12127 / PCA).